Consider the following 363-residue polypeptide: Ankyrin repeat domain-containing protein 40 (363 aa).

Met1 carries the N-acetylmethionine modification. 2 ANK repeats span residues 9 to 38 (EQQE…DVNS) and 43 to 72 (NGWT…DREI). The segment at 135–167 (DSTQLQNGGPSPPPVSPPADSSPPLLPPTETPL) is disordered. Residues 144-164 (PSPPPVSPPADSSPPLLPPTE) show a composition bias toward pro residues. Ser176 is subject to Phosphoserine.

The sequence is that of Ankyrin repeat domain-containing protein 40 (Ankrd40) from Mus musculus (Mouse).